The following is a 308-amino-acid chain: Serpentine receptor class V-1 (308 aa).

7 helical membrane-spanning segments follow: residues 15–35 (VSTA…YILF), 46–68 (PFFR…STFF), 88–108 (VVPI…IIFI), 135–155 (LLLI…STDF), 184–204 (AMVD…AIFI), 222–242 (LALS…CSLL), and 256–276 (TMWF…LLAL).

The protein belongs to the nematode receptor-like protein srv family.

It localises to the membrane. The sequence is that of Serpentine receptor class V-1 (srv-1) from Caenorhabditis elegans.